The primary structure comprises 604 residues: MASAHIEHKLSLLPDLPGCYLMKNLNSQIIYVGKAKNLKNRVRSYFKSSHTGKTARLVSEIADFEFIVTSTDKEAFLLEITLIQKHQPYFNIKLKKGTGYPYIKITNERDPQILIVSDVRKDGGYYFGPYPNVYAAQETVNFIQKVYPLRRCHGFQKRPCLYYHMGQCLGACFKTVPVAEYDAQIKRIKSFLNGHVETVKKQLTKRMDQAAADLEFERAAELRDQLNYIEMTVEKQKIISNDNTPRDLFNFYLDKGWLSIQVFFIRQARLMKREKRLFPVVSTAPEEMTSFILQFYNRKNNVLPREVLVPNGLDKQVLSDILGIPVRTPQRGQKKDLLDMAQKNARIVLEEKFRLLELDERKTTGAMQEITDALGIPAGHKIEAFDHSHIQGADLVSAMVVFTDGQPNKKLYRKYKLRTVDHADEAASTREVIRRRYTRLLKEHAALPDLILMDGGEIQLEAAKDVLENELGIATPVAAMVKNDHHKTADLLASAGDQHLHLDPKSQGFYLLQRIQDEVHRFAITFHRQVHTKHSLSSRLDEIPGVGPKTRNKLLRKFGSMSKIAGASLEEIQSLGIAKNVAQTVKFSLAGGGVTPKHYQKGAT.

A GIY-YIG domain is found at 15–92; it reads DLPGCYLMKN…IQKHQPYFNI (78 aa). A UVR domain is found at 197–232; sequence ETVKKQLTKRMDQAAADLEFERAAELRDQLNYIEMT.

This sequence belongs to the UvrC family. Interacts with UvrB in an incision complex.

The protein localises to the cytoplasm. Functionally, the UvrABC repair system catalyzes the recognition and processing of DNA lesions. UvrC both incises the 5' and 3' sides of the lesion. The N-terminal half is responsible for the 3' incision and the C-terminal half is responsible for the 5' incision. This Lactiplantibacillus plantarum (strain ATCC BAA-793 / NCIMB 8826 / WCFS1) (Lactobacillus plantarum) protein is UvrABC system protein C.